The primary structure comprises 453 residues: Serine/threonine-protein phosphatase 2A regulatory subunit B'' subunit gamma (453 aa).

2 consecutive EF-hand domains span residues 273 to 308 (PSAL…TMTN) and 341 to 376 (KEPA…IQEL). The Ca(2+) site is built by aspartate 286, aspartate 288, asparagine 290, methionine 292, and glutamate 297.

Interacts with MCM3AP/GANP, PPP5C, and the phosphatase 2A core enzyme composed of the PPP2CA catalytic subunit and the constant regulatory subunit PPP2R1A. Finds in a complex with ABCB1, TFPI2 and PPP2R3C; leading to the dephosphorylation of ABCB1. Expressed in all tissues tested including heart, brain, spleen, thymus, lung, liver, kidney and testis.

It localises to the nucleus. It is found in the cytoplasm. May regulate MCM3AP phosphorylation through phosphatase recruitment. May act as a negative regulator of ABCB1 expression and function through the dephosphorylation of ABCB1 by TFPI2/PPP2R3C complex. May play a role in the activation-induced cell death of B-cells. In Mus musculus (Mouse), this protein is Serine/threonine-protein phosphatase 2A regulatory subunit B'' subunit gamma (Ppp2r3c).